The sequence spans 77 residues: U8-lycotoxin-Ls1q (77 aa).

A signal peptide spans methionine 1 to alanine 20. Residues glutamine 21–lysine 26 constitute a propeptide that is removed on maturation.

Belongs to the neurotoxin 19 (CSTX) family. 08 (U8-Lctx) subfamily. Contains 4 disulfide bonds. In terms of tissue distribution, expressed by the venom gland.

It is found in the secreted. This is U8-lycotoxin-Ls1q from Lycosa singoriensis (Wolf spider).